The sequence spans 604 residues: Serine/threonine-protein phosphatase 2B catalytic subunit A2 (604 aa).

The interval 21–48 is disordered; sequence NKTERPQSSTTPIDSKASTVAAANSTAT. T31 is subject to Phosphothreonine. Positions 35-48 are enriched in low complexity; it reads SKASTVAAANSTAT. Residues D144, H146, and D172 each contribute to the Fe cation site. Residues D172 and N204 each contribute to the Zn(2+) site. The active-site Proton donor is H205. Zn(2+) contacts are provided by H253 and H359. The interval 470 to 497 is disordered; sequence KKLPQAGKSEATPQPATSASPKHASILD. The segment covering 480–489 has biased composition (polar residues); sequence ATPQPATSAS. Residues S489 and S520 each carry the phosphoserine modification. The segment at 501–523 is calmodulin-binding; it reads RRKALRNKILAVAKVSRMYSVLR.

Belongs to the PPP phosphatase family. PP-2B subfamily. In terms of assembly, composed of two components (A and B), the A component is the catalytic subunit and the B component confers calcium sensitivity. Requires Fe(3+) as cofactor. It depends on Zn(2+) as a cofactor.

The enzyme catalyses O-phospho-L-seryl-[protein] + H2O = L-seryl-[protein] + phosphate. It carries out the reaction O-phospho-L-threonyl-[protein] + H2O = L-threonyl-[protein] + phosphate. Functionally, calcium-dependent, calmodulin-stimulated protein phosphatase. This subunit may have a role in the calmodulin activation of calcineurin. The sequence is that of Serine/threonine-protein phosphatase 2B catalytic subunit A2 (CMP2) from Saccharomyces cerevisiae (strain ATCC 204508 / S288c) (Baker's yeast).